The primary structure comprises 253 residues: Ubiquinone biosynthesis O-methyltransferase (253 aa).

Positions 47, 78, 99, and 141 each coordinate S-adenosyl-L-methionine.

The protein belongs to the methyltransferase superfamily. UbiG/COQ3 family.

The catalysed reaction is a 3-demethylubiquinol + S-adenosyl-L-methionine = a ubiquinol + S-adenosyl-L-homocysteine + H(+). It catalyses the reaction a 3-(all-trans-polyprenyl)benzene-1,2-diol + S-adenosyl-L-methionine = a 2-methoxy-6-(all-trans-polyprenyl)phenol + S-adenosyl-L-homocysteine + H(+). Its pathway is cofactor biosynthesis; ubiquinone biosynthesis. O-methyltransferase that catalyzes the 2 O-methylation steps in the ubiquinone biosynthetic pathway. This is Ubiquinone biosynthesis O-methyltransferase from Rhodopseudomonas palustris (strain BisB5).